We begin with the raw amino-acid sequence, 680 residues long: Penicillin-binding protein 2B (680 aa).

At methionine 1 to serine 8 the chain is on the cytoplasmic side. The chain crosses the membrane as a helical span at residues isoleucine 9–glycine 29. Residues arginine 30 to asparagine 680 are Extracellular-facing. The Acyl-ester intermediate role is filled by serine 386.

It belongs to the transpeptidase family. Interacts with MreC in the elongasome.

The protein localises to the cell membrane. In terms of biological role, a transpeptidase that forms peptide cross-links between adjacent glycan strands in cell wall peptidoglycan (PG). Part of the elongasome machinery that synthesizes peripheral PG. The sequence is that of Penicillin-binding protein 2B from Streptococcus pneumoniae serotype 2 (strain D39 / NCTC 7466).